The chain runs to 722 residues: Glycine--tRNA ligase beta subunit (722 aa).

The protein belongs to the class-II aminoacyl-tRNA synthetase family. In terms of assembly, tetramer of two alpha and two beta subunits.

The protein localises to the cytoplasm. It carries out the reaction tRNA(Gly) + glycine + ATP = glycyl-tRNA(Gly) + AMP + diphosphate. The polypeptide is Glycine--tRNA ligase beta subunit (Xylella fastidiosa (strain Temecula1 / ATCC 700964)).